Reading from the N-terminus, the 383-residue chain is Queuine tRNA-ribosyltransferase (383 aa).

Aspartate 90 acts as the Proton acceptor in catalysis. Substrate-binding positions include 90 to 94 (DSGGF), aspartate 144, glutamine 193, and glycine 227. Residues 258–264 (GVGTPED) form an RNA binding region. Aspartate 277 acts as the Nucleophile in catalysis. The interval 282–286 (TRNAR) is RNA binding; important for wobble base 34 recognition. 4 residues coordinate Zn(2+): cysteine 315, cysteine 317, cysteine 320, and histidine 346.

It belongs to the queuine tRNA-ribosyltransferase family. In terms of assembly, homodimer. Within each dimer, one monomer is responsible for RNA recognition and catalysis, while the other monomer binds to the replacement base PreQ1. It depends on Zn(2+) as a cofactor.

The catalysed reaction is 7-aminomethyl-7-carbaguanine + guanosine(34) in tRNA = 7-aminomethyl-7-carbaguanosine(34) in tRNA + guanine. It participates in tRNA modification; tRNA-queuosine biosynthesis. Its function is as follows. Catalyzes the base-exchange of a guanine (G) residue with the queuine precursor 7-aminomethyl-7-deazaguanine (PreQ1) at position 34 (anticodon wobble position) in tRNAs with GU(N) anticodons (tRNA-Asp, -Asn, -His and -Tyr). Catalysis occurs through a double-displacement mechanism. The nucleophile active site attacks the C1' of nucleotide 34 to detach the guanine base from the RNA, forming a covalent enzyme-RNA intermediate. The proton acceptor active site deprotonates the incoming PreQ1, allowing a nucleophilic attack on the C1' of the ribose to form the product. After dissociation, two additional enzymatic reactions on the tRNA convert PreQ1 to queuine (Q), resulting in the hypermodified nucleoside queuosine (7-(((4,5-cis-dihydroxy-2-cyclopenten-1-yl)amino)methyl)-7-deazaguanosine). This chain is Queuine tRNA-ribosyltransferase, found in Ralstonia nicotianae (strain ATCC BAA-1114 / GMI1000) (Ralstonia solanacearum).